A 78-amino-acid chain; its full sequence is uncharacterized protein (78 aa).

This is an uncharacterized protein from Escherichia coli (strain K12).